A 334-amino-acid polypeptide reads, in one-letter code: 2,3-bisphosphoglycerate-dependent phosphoglycerate mutase 1 (334 aa).

Residues 1 to 48 (MATATSHQSVVSFASLRSSPSSTISQCGFKIDSSLSFTSKKTNFCKIK) constitute a chloroplast transit peptide. Residues 84-91 (RHGESLWN), 97-98 (TG), Arg134, 188-191 (ERMY), Lys199, 215-216 (RR), and 259-260 (GN) each bind substrate. The active-site Tele-phosphohistidine intermediate is His85. The active-site Proton donor/acceptor is Glu188.

It belongs to the phosphoglycerate mutase family. BPG-dependent PGAM subfamily.

Its subcellular location is the plastid. The protein localises to the chloroplast. The catalysed reaction is (2R)-2-phosphoglycerate = (2R)-3-phosphoglycerate. It participates in carbohydrate degradation; glycolysis; pyruvate from D-glyceraldehyde 3-phosphate: step 3/5. Catalyzes the interconversion of 2-phosphoglycerate and 3-phosphoglycerate. The protein is 2,3-bisphosphoglycerate-dependent phosphoglycerate mutase 1 of Arabidopsis thaliana (Mouse-ear cress).